The following is a 225-amino-acid chain: MMNSIFGKRKTPAELLRENKRMLDKSIREIERERQGLQTQEKKLINEIKKTAKQGQMGAVKVMAKDLIRTRHQIEKFYKLKSQLQGVSLRIQTLKSTQAMGEAMKGVTKAMGQMNRQMNLPSLQKIMQEFERQNEKMEMVSEVMGDAIDDALEGDEEEEETEDLVSQVLDEIGIDINQELVNAPSGAVAVPAAKNKVVQAEATGAEDSGGIDSDLQARLDNLRKM.

Residues 13-54 (AELLRENKRMLDKSIREIERERQGLQTQEKKLINEIKKTAKQ) are a coiled coil.

It belongs to the SNF7 family. Component of the endosomal sorting required for transport complex III (ESCRT-III), composed at least of VPS2, VPS20, VPS24 and VPS32. Interacts with SKD1.

Its subcellular location is the endosome. Functionally, component of the ESCRT-III complex, which is required for multivesicular bodies (MVBs) formation and sorting of endosomal cargo proteins into MVBs. The ESCRT-III complex is probably involved in the concentration of MVB cargo. This chain is Vacuolar protein sorting-associated protein 2 homolog 1 (VPS2.1), found in Arabidopsis thaliana (Mouse-ear cress).